Here is a 673-residue protein sequence, read N- to C-terminus: DNA ligase (673 aa).

NAD(+) contacts are provided by residues 34–38 (DAEYD), 83–84 (SL), and Glu-116. Catalysis depends on Lys-118, which acts as the N6-AMP-lysine intermediate. Residues Arg-139, Glu-176, Lys-293, and Lys-317 each contribute to the NAD(+) site. 4 residues coordinate Zn(2+): Cys-411, Cys-414, Cys-429, and Cys-435. One can recognise a BRCT domain in the interval 595 to 673 (NQQNPFFGKT…EDEFLKWVNS (79 aa)).

This sequence belongs to the NAD-dependent DNA ligase family. LigA subfamily. The cofactor is Mg(2+). Mn(2+) serves as cofactor.

The catalysed reaction is NAD(+) + (deoxyribonucleotide)n-3'-hydroxyl + 5'-phospho-(deoxyribonucleotide)m = (deoxyribonucleotide)n+m + AMP + beta-nicotinamide D-nucleotide.. Functionally, DNA ligase that catalyzes the formation of phosphodiester linkages between 5'-phosphoryl and 3'-hydroxyl groups in double-stranded DNA using NAD as a coenzyme and as the energy source for the reaction. It is essential for DNA replication and repair of damaged DNA. The polypeptide is DNA ligase (Legionella pneumophila (strain Lens)).